The sequence spans 829 residues: Cap-specific mRNA (nucleoside-2'-O-)-methyltransferase 1 (829 aa).

The interval 1-68 (MKRAAQASDE…DSQNSQGSMA (68 aa)) is disordered. A Bipartite nuclear localization signal motif is present at residues 2–16 (KRAAQASDEPLKKRK). Over residues 31-44 (QRTTSQDSSQSESL) the composition is skewed to low complexity. Residues 55–68 (SRPSDSQNSQGSMA) are compositionally biased toward polar residues. A G-patch domain is found at 79 to 125 (YNNVSQKLMAKMGFREGEGLGKYGQGRKEIVEASTQRGRRGLGLMLK). Residues 195 to 199 (KTVFD) and Arg210 contribute to the substrate site. In terms of domain architecture, RrmJ-type SAM-dependent 2'-O-MTase spans 223 to 442 (FFLNRAAMKM…ERYVVCKGLK (220 aa)). Asn226 is a binding site for S-adenosyl-L-methionine. Lys231 is a catalytic residue. Residues 269 to 275 (CAGPGGF) and 327 to 328 (DI) contribute to the S-adenosyl-L-methionine site. Asp356 is a catalytic residue. 366–368 (NLQ) contributes to the substrate binding site. Lys396 functions as the Proton acceptor in the catalytic mechanism. Asn431 provides a ligand contact to substrate. The WW domain occupies 745 to 779 (KTVNDPWTMAFSKSSKRKFFYNKQTKESTYDLPAT).

Its subcellular location is the nucleus. The catalysed reaction is a 5'-end (N(7)-methyl 5'-triphosphoguanosine)-ribonucleoside in mRNA + S-adenosyl-L-methionine = a 5'-end (N(7)-methyl 5'-triphosphoguanosine)-(2'-O-methyl-ribonucleoside) in mRNA + S-adenosyl-L-homocysteine + H(+). Functionally, S-adenosyl-L-methionine-dependent methyltransferase that mediates mRNA cap1 2'-O-ribose methylation to the 5'-cap structure of mRNAs. Methylates the ribose of the first nucleotide of a m(7)GpppG-capped mRNA and small nuclear RNA (snRNA) to produce m(7)GpppRm (cap1). Displays a preference for cap0 transcripts. Cap1 modification is linked to higher levels of translation. May be involved in the interferon response pathway. The protein is Cap-specific mRNA (nucleoside-2'-O-)-methyltransferase 1 (cmtr1) of Danio rerio (Zebrafish).